The primary structure comprises 473 residues: Glutamine synthetase (473 aa).

In terms of domain architecture, GS beta-grasp spans 18 to 102 (NNIKWVDLQF…VLTKVFWGGG (85 aa)). The GS catalytic domain maps to 110–473 (PRGIAEEAEK…PMEIYQYLDS (364 aa)). 2 residues coordinate Mg(2+): glutamate 133 and glutamate 135. An ATP-binding site is contributed by glutamate 207. Glutamate 212 and glutamate 220 together coordinate Mg(2+). Residues 264-265 (NG) and glycine 265 each bind L-glutamate. Histidine 269 is a binding site for Mg(2+). ATP is bound by residues 271–273 (HFS) and serine 273. Residues arginine 324, glutamate 330, and arginine 342 each contribute to the L-glutamate site. Positions 342, 347, and 357 each coordinate ATP. Residue glutamate 362 coordinates Mg(2+). Arginine 364 is a binding site for L-glutamate.

This sequence belongs to the glutamine synthetase family. In terms of assembly, oligomer of 12 subunits arranged in the form of two hexagons. Mg(2+) serves as cofactor. It depends on Mn(2+) as a cofactor.

Its subcellular location is the cytoplasm. It catalyses the reaction L-glutamate + NH4(+) + ATP = L-glutamine + ADP + phosphate + H(+). With respect to regulation, strongly inhibited by glycine and L-alanine. AMP at 10 mM displays a very weak inhibitory effect. The activity of this enzyme is not controlled by adenylation. Functionally, probably involved in nitrogen metabolism via ammonium assimilation. Catalyzes the ATP-dependent biosynthesis of glutamine from glutamate and ammonia. In Sulfolobus acidocaldarius (strain ATCC 33909 / DSM 639 / JCM 8929 / NBRC 15157 / NCIMB 11770), this protein is Glutamine synthetase.